We begin with the raw amino-acid sequence, 379 residues long: Cytochrome b (379 aa).

Helical transmembrane passes span phenylalanine 33 to methionine 53, tryptophan 77 to isoleucine 98, tryptophan 113 to leucine 133, and phenylalanine 178 to leucine 198. Heme b is bound by residues histidine 83 and histidine 97. Residues histidine 182 and histidine 196 each coordinate heme b. A ubiquinone is bound at residue histidine 201. 4 helical membrane-spanning segments follow: residues threonine 226–phenylalanine 246, leucine 288–histidine 308, isoleucine 320–glycine 340, and phenylalanine 347–residue 367.

It belongs to the cytochrome b family. In terms of assembly, the cytochrome bc1 complex contains 11 subunits: 3 respiratory subunits (MT-CYB, CYC1 and UQCRFS1), 2 core proteins (UQCRC1 and UQCRC2) and 6 low-molecular weight proteins (UQCRH/QCR6, UQCRB/QCR7, UQCRQ/QCR8, UQCR10/QCR9, UQCR11/QCR10 and a cleavage product of UQCRFS1). This cytochrome bc1 complex then forms a dimer. Heme b serves as cofactor.

It is found in the mitochondrion inner membrane. In terms of biological role, component of the ubiquinol-cytochrome c reductase complex (complex III or cytochrome b-c1 complex) that is part of the mitochondrial respiratory chain. The b-c1 complex mediates electron transfer from ubiquinol to cytochrome c. Contributes to the generation of a proton gradient across the mitochondrial membrane that is then used for ATP synthesis. The chain is Cytochrome b (MT-CYB) from Thomomys umbrinus (Southern pocket gopher).